The sequence spans 776 residues: V-set and immunoglobulin domain-containing protein 10-like 2 (776 aa).

The first 28 residues, 1–28 (MVGLSAHHRPLGCRLLILFCLLHPGASG), serve as a signal peptide directing secretion. 5 consecutive Ig-like domains span residues 32–140 (PTSN…LYLM), 150–234 (PRVQ…AFLD), 242–324 (PVIT…TTVQ), 399–498 (PTLA…LRLE), and 500–592 (PQLT…VLLE). Cystine bridges form between cysteine 56/cysteine 122, cysteine 169/cysteine 217, cysteine 268/cysteine 308, cysteine 435/cysteine 480, and cysteine 521/cysteine 576. Residues 608–708 (TPPNVTISRL…EVKTPVDPAF (101 aa)) enclose the Fibronectin type-III domain. 2 N-linked (GlcNAc...) asparagine glycosylation sites follow: asparagine 611 and asparagine 637. The chain crosses the membrane as a helical span at residues 713 to 733 (AVLGAAGTGVVVALATSLLVF).

The protein localises to the membrane. This Mus musculus (Mouse) protein is V-set and immunoglobulin domain-containing protein 10-like 2.